We begin with the raw amino-acid sequence, 463 residues long: MAKNTKLWGGRFEGTVEDWVERFGASISFDQKLAKFDVIGSLAHVQMLGQTGILSLEESEKIQVGLKELLEELEAGQLDFDIANEDIHMNMEVLLTEKIGPLAGKLHTARSRNDQVATDMHLYLKEQLGYVLDKLAHLKGVLLDLAENHVATIMPGYTHLQHAQPISFAYHLMAYYNMFQRDSERFEFNQKHTDLCPLGAAALAGTTFPIDRQLSSDLLEFKQPYTNSLDAVSDRDFILEFLSNASILMMHMSRFCEEMINWCSFEYQFITLSDTFTIGSSIMPQKKNPDMAELIRGKTGRVYGHLFGLLTVMKSLPLAYNKDLQEDKEGMFDTVETILNSLDVLAGMLSSLQVNKEKMQESTEKDFSNATELADYLAGKGLPFREAHEVVGRLVLDSIKSAKNLQDWTLEELQTYHSLITEDIYVYLQPKTAVQRRNSLGGTGFDQVEYQIAVAKKANEAKK.

The protein belongs to the lyase 1 family. Argininosuccinate lyase subfamily.

Its subcellular location is the cytoplasm. It carries out the reaction 2-(N(omega)-L-arginino)succinate = fumarate + L-arginine. The protein operates within amino-acid biosynthesis; L-arginine biosynthesis; L-arginine from L-ornithine and carbamoyl phosphate: step 3/3. The sequence is that of Argininosuccinate lyase from Streptococcus pneumoniae serotype 2 (strain D39 / NCTC 7466).